The chain runs to 117 residues: Large ribosomal subunit protein uL24 (117 aa).

The protein belongs to the universal ribosomal protein uL24 family. As to quaternary structure, part of the 50S ribosomal subunit.

In terms of biological role, one of two assembly initiator proteins, it binds directly to the 5'-end of the 23S rRNA, where it nucleates assembly of the 50S subunit. One of the proteins that surrounds the polypeptide exit tunnel on the outside of the subunit. This Thermosynechococcus vestitus (strain NIES-2133 / IAM M-273 / BP-1) protein is Large ribosomal subunit protein uL24.